The chain runs to 93 residues: UPF0250 protein PA3998 (93 aa).

This sequence belongs to the UPF0250 family.

This Pseudomonas aeruginosa (strain ATCC 15692 / DSM 22644 / CIP 104116 / JCM 14847 / LMG 12228 / 1C / PRS 101 / PAO1) protein is UPF0250 protein PA3998.